The following is a 20-amino-acid chain: Phospholipase A2 homolog P-elapitoxin-Aa1a gamma chain (20 aa).

It belongs to the phospholipase A2 family. Group I subfamily. Heterotrimer of alpha, beta and gamma chains, each related to PLA2. Glycosylated. Expressed by the venom gland.

It is found in the secreted. Its function is as follows. Heterotrimer: Snake venom phospholipase A2 (PLA2) that has presynaptic neurotoxicity. Inhibits nerve-evoked twitch contractions but not responses to cholinergic agonists acetylcholine and carbachol and to depolarizing agonist KCl. Causes a fade in tetanic contractions. Displays a triphasic mode of action with depression, enhancement and blockade of neurotransmission. Does not display myotoxic activity such as changes in baseline muscle tension or inhibition of directly stimulated muscle twitches. All subunits are necessary for maximum toxicity. Monomer: the gamma chain has no significant enzymatic activity and is not toxic by itself. The sequence is that of Phospholipase A2 homolog P-elapitoxin-Aa1a gamma chain from Acanthophis antarcticus (Common death adder).